We begin with the raw amino-acid sequence, 123 residues long: Large ribosomal subunit protein uL18 (123 aa).

It belongs to the universal ribosomal protein uL18 family. As to quaternary structure, part of the 50S ribosomal subunit; part of the 5S rRNA/L5/L18/L25 subcomplex. Contacts the 5S and 23S rRNAs.

This is one of the proteins that bind and probably mediate the attachment of the 5S RNA into the large ribosomal subunit, where it forms part of the central protuberance. The sequence is that of Large ribosomal subunit protein uL18 from Symbiobacterium thermophilum (strain DSM 24528 / JCM 14929 / IAM 14863 / T).